A 263-amino-acid polypeptide reads, in one-letter code: Apolipoprotein A-I (263 aa).

The signal sequence occupies residues 1 to 18 (MKAVVLAVAVLFLTGSQA). A run of 2 repeats spans residues 66 to 87 (LKLLDNWDTLSTTFSKLRSELG) and 88 to 109 (PVTQEFWDNLEKDTEWLRQEMN). Residues 66 to 263 (LKLLDNWDTL…DEVSKKLSAQ (198 aa)) form a 10 X approximate tandem repeats region. The residue at position 108 (Met-108) is a Methionine sulfoxide. The stretch at 110–120 (KDLVEVKEKVQ) is one 3; half-length repeat. 5 tandem repeats follow at residues 121–142 (PYLKNFQEKVQLELEHYRKKVE), 143–164 (PLGTDLRDGARQKLQELQEKLT), 165–186 (PLGEDLRDRARQHVDELRAQLG), 187–206 (PYSDQMRQRLTQRLEALKDS), and 207–228 (ASLAEYQAKAQEHLKTFSEKAK). One copy of the 9; half-length repeat lies at 229-239 (PALEDLRLGLL). Repeat 10 spans residues 240-263 (PVLESLKASFLSSIDEVSKKLSAQ).

Belongs to the apolipoprotein A1/A4/E family. Homodimer. Interacts with APOA1BP and CLU. Component of a sperm activating protein complex (SPAP), consisting of APOA1, an immunoglobulin heavy chain, an immunoglobulin light chain and albumin. Interacts with NDRG1. Interacts with SCGB3A2. Interacts with NAXE and YJEFN3. Post-translationally, glycosylated. In terms of processing, palmitoylated. Phosphorylation sites are present in the extracellular medium.

The protein localises to the secreted. Its function is as follows. Participates in the reverse transport of cholesterol from tissues to the liver for excretion by promoting cholesterol efflux from tissues and by acting as a cofactor for the lecithin cholesterol acyltransferase (LCAT). As part of the SPAP complex, activates spermatozoa motility. This is Apolipoprotein A-I (APOA1) from Octodon degus (Degu).